The chain runs to 393 residues: Lipid-A-disaccharide synthase (393 aa).

It belongs to the LpxB family.

It catalyses the reaction a lipid X + a UDP-2-N,3-O-bis[(3R)-3-hydroxyacyl]-alpha-D-glucosamine = a lipid A disaccharide + UDP + H(+). Its pathway is bacterial outer membrane biogenesis; LPS lipid A biosynthesis. In terms of biological role, condensation of UDP-2,3-diacylglucosamine and 2,3-diacylglucosamine-1-phosphate to form lipid A disaccharide, a precursor of lipid A, a phosphorylated glycolipid that anchors the lipopolysaccharide to the outer membrane of the cell. The chain is Lipid-A-disaccharide synthase from Bordetella petrii (strain ATCC BAA-461 / DSM 12804 / CCUG 43448).